A 237-amino-acid polypeptide reads, in one-letter code: Uridylate kinase (237 aa).

9 to 12 (KLSG) contributes to the ATP binding site. Gly-51 contacts UMP. Gly-52 and Arg-56 together coordinate ATP. UMP-binding positions include Asp-71 and 132 to 139 (CGNPFFTT). Residues Thr-159, Tyr-165, and Asp-168 each coordinate ATP.

This sequence belongs to the UMP kinase family. In terms of assembly, homohexamer.

The protein localises to the cytoplasm. The catalysed reaction is UMP + ATP = UDP + ADP. Its pathway is pyrimidine metabolism; CTP biosynthesis via de novo pathway; UDP from UMP (UMPK route): step 1/1. Its activity is regulated as follows. Inhibited by UTP. Catalyzes the reversible phosphorylation of UMP to UDP. The sequence is that of Uridylate kinase from Prochlorococcus marinus (strain MIT 9303).